Here is a 230-residue protein sequence, read N- to C-terminus: MGQKASQQVAPKDSQEVLAMCEVVSAAISHAAQKLKEYLGFEYPLSRLCLAASSLTEVFLVHFVTFCQERGADEWLTTTKMTKHQAWLFGADWIWTFWGPDKQIRLQVAVQTLRMASLPLTDPKSCESRGEESWKKGRFDKLQEFCNLVGEDCLGLFIIFGVPGEPKAIRGVVLESVRNGMMESQLPGRKAVEQFVLETKDCISIKELLGNCLSKRDGLSDMGRVYIRIL.

Gly-2 carries the N-myristoyl glycine lipid modification.

In terms of assembly, interacts with the GTP-bound form of RAB15, RAB3A-D and RAB34.

The protein localises to the early endosome membrane. Its function is as follows. Effector that interacts with Rab GTPases in their active form (GTP-bound) including RAB15, RAB3A-D and RAB34. Controls downstream signaling such as cell proliferation and cell migration. Also regulates transferrin receptor recycling from the endocytic recycling compartment. The sequence is that of Rab15 effector protein from Mus musculus (Mouse).